Here is a 61-residue protein sequence, read N- to C-terminus: Probable tautomerase stu1128 (61 aa).

Pro-2 serves as the catalytic Proton acceptor; via imino nitrogen.

It belongs to the 4-oxalocrotonate tautomerase family.

This is Probable tautomerase stu1128 from Streptococcus thermophilus (strain ATCC BAA-250 / LMG 18311).